Here is a 406-residue protein sequence, read N- to C-terminus: Exodeoxyribonuclease 7 large subunit (406 aa).

Belongs to the XseA family. As to quaternary structure, heterooligomer composed of large and small subunits.

The protein resides in the cytoplasm. It carries out the reaction Exonucleolytic cleavage in either 5'- to 3'- or 3'- to 5'-direction to yield nucleoside 5'-phosphates.. Functionally, bidirectionally degrades single-stranded DNA into large acid-insoluble oligonucleotides, which are then degraded further into small acid-soluble oligonucleotides. The protein is Exodeoxyribonuclease 7 large subunit of Desulforudis audaxviator (strain MP104C).